The primary structure comprises 1091 residues: Sodium/potassium exporting P-type ATPase 2 (1091 aa).

Residues 1–63 (MSEGTVKENN…LGDDTKIDYK (63 aa)) are Cytoplasmic-facing. Residues 64 to 84 (AMVLHQVCNAMIMVLVISMAI) traverse the membrane as a helical segment. At 85-90 (SFAVRD) the chain is on the extracellular side. The chain crosses the membrane as a helical span at residues 91–111 (WITGGVISFVIAVNVLIGLVQ). Topologically, residues 112-282 (EYKATKTMNS…TNVGTPLHRK (171 aa)) are cytoplasmic. The chain crosses the membrane as a helical span at residues 283–303 (LSKLAVLLFWIAVLFAIIVMA). Residues 304–312 (SQKFDVDKR) are Extracellular-facing. The helical transmembrane segment at 313–333 (VAIYAICVALSMIPSSLVVVL) threads the bilayer. The Cytoplasmic segment spans residues 334–815 (TITMSVGAAV…RRMTDNIQKF (482 aa)). The 4-aspartylphosphate intermediate role is filled by Asp-369. Residues Asp-369 and Thr-371 each contribute to the Mg(2+) site. Thr-371 and Glu-483 together coordinate ATP. The disordered stretch occupies residues 499–525 (ALTGEKSTNQSNENDQSSLSQHNEKPG). A compositionally biased stretch (polar residues) spans 503 to 519 (EKSTNQSNENDQSSLSQ). 7 residues coordinate ATP: Lys-561, Arg-606, Thr-673, Gly-674, Asp-675, Arg-732, and Lys-738. Mg(2+) is bound at residue Asp-757. Asn-760 is a binding site for ATP. The helical transmembrane segment at 816 to 836 (VLQLLAENVAQALYLIIGLVF) threads the bilayer. Over 837-848 (RDENGKSVFPLS) the chain is Extracellular. Residues 849–869 (PVEVLWIIVVTSCFPAMGLGL) form a helical membrane-spanning segment. Residues 870 to 885 (EKAAPDLMDRPPHDSE) lie on the Cytoplasmic side of the membrane. Residues 886–906 (VGIFTWEVIIDTFAYGIIMTG) form a helical membrane-spanning segment. At 907–943 (SCMASFTGSLYGINSGRLGHDCDGTYNSSCRDVYRSR) the chain is on the extracellular side. The chain crosses the membrane as a helical span at residues 944–964 (SAAFATMTWCALILAWEVVDM). Topologically, residues 965 to 991 (RRSFFRMHPDTDSPVKEFFRSIWGNQF) are cytoplasmic. Residues 992 to 1012 (LFWSIIFGFVSAFPVVYIPVI) traverse the membrane as a helical segment. Residues 1013-1021 (NDKVFLHKP) lie on the Extracellular side of the membrane. A helical membrane pass occupies residues 1022 to 1042 (IGAEWGLAIAFTIAFWIGAEL). Over 1043–1091 (YKCGKRRYFKTQRAHNPENDLESNNKRDPFEAYSTSTTIHTEVNIGIKQ) the chain is Cytoplasmic.

It belongs to the cation transport ATPase (P-type) (TC 3.A.3) family. Type IID subfamily. Mg(2+) serves as cofactor. The active site is phosphorylated in presence of sodium or potassium and in conditions of higher pH. Not phosphorylated in presence of calcium ions.

It is found in the cell membrane. The enzyme catalyses Na(+)(in) + ATP + H2O = Na(+)(out) + ADP + phosphate + H(+). The catalysed reaction is K(+)(in) + ATP + H2O = K(+)(out) + ADP + phosphate + H(+). Catalyzes the hydrolysis of ATP coupled with the export of sodium and potassium from the cell. May export potassium less efficiently. May transport other cations such as lithium. Sodium/potassium efflux ATPases are involved in salt tolerance and maintaining the membrane potential across the plasma membrane in high salinity (Na+) or alkaline (K+) environments. The polypeptide is Sodium/potassium exporting P-type ATPase 2 (Saccharomyces cerevisiae (strain ATCC 204508 / S288c) (Baker's yeast)).